We begin with the raw amino-acid sequence, 401 residues long: Nicotinate phosphoribosyltransferase (401 aa).

A Phosphohistidine; by autocatalysis modification is found at histidine 221.

The protein belongs to the NAPRTase family. In terms of processing, transiently phosphorylated on a His residue during the reaction cycle. Phosphorylation strongly increases the affinity for substrates and increases the rate of nicotinate D-ribonucleotide production. Dephosphorylation regenerates the low-affinity form of the enzyme, leading to product release.

The enzyme catalyses nicotinate + 5-phospho-alpha-D-ribose 1-diphosphate + ATP + H2O = nicotinate beta-D-ribonucleotide + ADP + phosphate + diphosphate. It functions in the pathway cofactor biosynthesis; NAD(+) biosynthesis; nicotinate D-ribonucleotide from nicotinate: step 1/1. Catalyzes the synthesis of beta-nicotinate D-ribonucleotide from nicotinate and 5-phospho-D-ribose 1-phosphate at the expense of ATP. This chain is Nicotinate phosphoribosyltransferase, found in Yersinia enterocolitica serotype O:8 / biotype 1B (strain NCTC 13174 / 8081).